A 78-amino-acid polypeptide reads, in one-letter code: Protein SlyX homolog (78 aa).

Belongs to the SlyX family.

The sequence is that of Protein SlyX homolog from Xanthomonas axonopodis pv. citri (strain 306).